Reading from the N-terminus, the 622-residue chain is Pheromone-regulated protein PRM7 (622 aa).

3 disordered regions span residues 1 to 35 (MYRTRSSDEVATLTDPTSSSDVATSADPTSSSAVT), 47 to 200 (STSV…TISA), and 374 to 405 (LTPVDSASSSRSSATSIIKPNMPVSSNDSKTQ). Residues 14–35 (TDPTSSSDVATSADPTSSSAVT) are compositionally biased toward polar residues. Composition is skewed to low complexity over residues 47 to 199 (STSV…VTIS) and 379 to 389 (SASSSRSSATS). Residues 396-405 (PVSSNDSKTQ) show a composition bias toward polar residues.

This Saccharomyces cerevisiae (strain YJM789) (Baker's yeast) protein is Pheromone-regulated protein PRM7 (PRM7).